Consider the following 589-residue polypeptide: UvrABC system protein C (589 aa).

Positions 14-91 (HKPGCYLWKD…IAKYKPKYNM (78 aa)) constitute a GIY-YIG domain.

This sequence belongs to the UvrC family. As to quaternary structure, interacts with UvrB in an incision complex.

It is found in the cytoplasm. In terms of biological role, the UvrABC repair system catalyzes the recognition and processing of DNA lesions. UvrC both incises the 5' and 3' sides of the lesion. The N-terminal half is responsible for the 3' incision and the C-terminal half is responsible for the 5' incision. This Malacoplasma penetrans (strain HF-2) (Mycoplasma penetrans) protein is UvrABC system protein C.